The following is a 245-amino-acid chain: MDGFNPRATTVAEYMDGTPKFRTDLYASTCGQLLSHKEYMRVVDMYGLKFTPELKAPEVPMPFMGKYSQEQYAQQLIDEYRAARISPDRVFLQSFSIDDIYFWNRHDADYARQAMFLDSRPDTPEGARQATATMAQLKQSGIRTLSPAFHALLKLDAGNNIVPSDYAVAAKKAGIKLTTWSLERSGPLNKVRASGDFYYSSIAAAIKDDGDIYRVVDVLAQKVGVAGIFSDWPATVSFYANCFNL.

The protein resides in the secreted. This is Extracellular protein ARB_04177 from Arthroderma benhamiae (strain ATCC MYA-4681 / CBS 112371) (Trichophyton mentagrophytes).